Reading from the N-terminus, the 197-residue chain is Fe/S biogenesis protein NfuA (197 aa).

[4Fe-4S] cluster-binding residues include Cys155 and Cys158.

This sequence belongs to the NfuA family. As to quaternary structure, homodimer. It depends on [4Fe-4S] cluster as a cofactor.

In terms of biological role, involved in iron-sulfur cluster biogenesis. Binds a 4Fe-4S cluster, can transfer this cluster to apoproteins, and thereby intervenes in the maturation of Fe/S proteins. Could also act as a scaffold/chaperone for damaged Fe/S proteins. In Pseudomonas syringae pv. syringae (strain B728a), this protein is Fe/S biogenesis protein NfuA.